A 221-amino-acid chain; its full sequence is Riboflavin kinase (221 aa).

The tract at residues 1–89 (MENIYIALKT…ISSILRFSQE (89 aa)) is H-T-H motif-like. The riboflavin kinase stretch occupies residues 90-221 (LKLVGAVQDG…EVLASIDGKL (132 aa)). CDP is bound at residue 99-104 (GLGEGK). Residues threonine 128 and asparagine 130 each contribute to the Mg(2+) site. FMN contacts are provided by serine 185 and glutamate 192. Position 197–200 (197–200 (KYLR)) interacts with CDP.

It belongs to the archaeal riboflavin kinase family. Mg(2+) is required as a cofactor.

The catalysed reaction is riboflavin + CTP = CDP + FMN + H(+). It participates in cofactor biosynthesis; FMN biosynthesis; FMN from riboflavin (CTP route): step 1/1. Functionally, catalyzes the CTP-dependent phosphorylation of riboflavin (vitamin B2) to form flavin mononucleotide (FMN). This is Riboflavin kinase (ribK) from Picrophilus torridus (strain ATCC 700027 / DSM 9790 / JCM 10055 / NBRC 100828 / KAW 2/3).